The sequence spans 234 residues: MFRNNYDGDTVTFSPTGRLFQVEYALEAIKQGSVTVGLRSNTHAVLVALKRNADELSSYQKKIIKCDEHMGLSLAGLAPDARVLSNYLRQQCNYSSLVFNRKLAVERAGHLLCDKAQKNTQSYGGRPYGVGLLIIGYDKSGAHLLEFQPSGNVTELYGTAIGARSQGAKTYLERTLDTFIKIDGNPDELIKAGVEAISQSLRDESLTVDNLSIAIVGKDTPFTIYDGEAVAKYI.

Ser14 carries the post-translational modification Phosphoserine. A Glycyl lysine isopeptide (Lys-Gly) (interchain with G-Cter in ubiquitin) cross-link involves residue Lys191.

The protein belongs to the peptidase T1A family. The 26S proteasome consists of a 20S proteasome core and two 19S regulatory subunits. The 20S proteasome core is composed of 28 subunits that are arranged in four stacked rings, resulting in a barrel-shaped structure. The two end rings are each formed by seven alpha subunits, and the two central rings are each formed by seven beta subunits. The catalytic chamber with the active sites is on the inside of the barrel.

Its subcellular location is the cytoplasm. The protein localises to the nucleus. Functionally, the proteasome degrades poly-ubiquitinated proteins in the cytoplasm and in the nucleus. It is essential for the regulated turnover of proteins and for the removal of misfolded proteins. The proteasome is a multicatalytic proteinase complex that is characterized by its ability to cleave peptides with Arg, Phe, Tyr, Leu, and Glu adjacent to the leaving group at neutral or slightly basic pH. It has an ATP-dependent proteolytic activity. The sequence is that of Proteasome subunit alpha type-6 (PRE5) from Saccharomyces cerevisiae (strain ATCC 204508 / S288c) (Baker's yeast).